The sequence spans 302 residues: 33 kDa chaperonin (302 aa).

2 disulfide bridges follow: Cys240–Cys242 and Cys273–Cys276.

The protein belongs to the HSP33 family. In terms of processing, under oxidizing conditions two disulfide bonds are formed involving the reactive cysteines. Under reducing conditions zinc is bound to the reactive cysteines and the protein is inactive.

The protein localises to the cytoplasm. Its function is as follows. Redox regulated molecular chaperone. Protects both thermally unfolding and oxidatively damaged proteins from irreversible aggregation. Plays an important role in the bacterial defense system toward oxidative stress. The chain is 33 kDa chaperonin from Synechocystis sp. (strain ATCC 27184 / PCC 6803 / Kazusa).